A 1025-amino-acid chain; its full sequence is Rho GTPase-activating protein Graf (1025 aa).

The 118-residue stretch at 271-388 (IFTKRGYLFL…WISAMDGTEP (118 aa)) folds into the PH domain. Positions 402–589 (YHLDEAGFMF…ILIDNYERIF (188 aa)) constitute a Rho-GAP domain. Residues 824–866 (GSASGPQQHPPVQRGLHSYGQTKHYSPLMPTSTSSSNDSVCDS) are disordered. Residues 854–866 (TSTSSSNDSVCDS) are compositionally biased toward low complexity. In terms of domain architecture, SH3 spans 963–1023 (TGTARVRTLY…PENYVEHLKP (61 aa)).

Interacts with Egfr (when ubiquitinated). In terms of tissue distribution, in the adult brain, expressed in the antennal lobe, the subesophageal ganglion and the alpha/beta neurons of the mushroom body.

It is found in the cytoplasm. The protein resides in the cytosol. The protein localises to the cytoplasmic vesicle. GTPase-activating protein for Rho family proteins. Essential component of the CLIC (clathrin-independent carrier)/GEEC (GPI-anchored protein-enriched early endocytic compartment) endocytic pathway. During hematopoiesis, inhibits Egfr-ras-MAPK signaling by promoting Spi-induced Egfr internalization through CLIC/GEEC endocytosis, thereby preventing plasmatocyte overproliferation. Essential for normal mushroom body (MB) development and consequently the formation of olfactory long-term memories. During MD development, required to stop the MB beta-lobe from crossing the brain midline, possibly acting via its role in the CLIC/GEEC endocytic pathway to down-regulate the Egfr-ras-MAPK signaling at the tip of the beta-lobes. Required during embryo cellularization for maintaining and regulating the rate of actomyosin ring constriction. During cellularization, inhibits Rho-GTP levels at the furrow canal tip in a spatiotemporal manner, thus delaying the onset of actomyosin contraction and ensuring appropriate closure of the cells at the base of nuclei after membrane extension. This Drosophila melanogaster (Fruit fly) protein is Rho GTPase-activating protein Graf.